Reading from the N-terminus, the 245-residue chain is 6-carboxyhexanoate--CoA ligase (245 aa).

It belongs to the BioW family. In terms of assembly, homodimer. Requires Mg(2+) as cofactor.

The enzyme catalyses heptanedioate + ATP + CoA = 6-carboxyhexanoyl-CoA + AMP + diphosphate. Its pathway is metabolic intermediate metabolism; pimeloyl-CoA biosynthesis; pimeloyl-CoA from pimelate: step 1/1. Catalyzes the transformation of pimelate into pimeloyl-CoA with concomitant hydrolysis of ATP to AMP. This is 6-carboxyhexanoate--CoA ligase from Sulfurihydrogenibium sp. (strain YO3AOP1).